The sequence spans 455 residues: F-box/FBD/LRR-repeat protein At3g51530 (455 aa).

The tract at residues 1-26 (MKNSERFSAAKPLMEQGGKSSRKPGF) is disordered. An F-box domain is found at 29 to 75 (EDRISELPEVLLLQILSSLPTKLVISTSVLSKRWLSLWKMVQRLEFE). LRR repeat units lie at residues 80–106 (IYDFAENVTRSLLSHKAPVLESLHLKV), 155–182 (ETLKLDYVYIYVPCPVSMKSLRTLHLLS), 183–208 (VVYKGDESGHNLFASCPNLEHLVLRR), 227–257 (TLLLSDPFSARESSRGYVIKAPSLKYLGIES), 277–302 (IRNVSKIVNENILGSLKSAKRLSLDL), and 325–351 (THKVEWWNLLTHMLDSSPKLQVLKLID). Residues 370-417 (KWNQPKYVPECLETFMWRNCNWGREEEKEVATYILRNARQLKKATFST) enclose the FBD domain.

This is F-box/FBD/LRR-repeat protein At3g51530 from Arabidopsis thaliana (Mouse-ear cress).